Reading from the N-terminus, the 605-residue chain is Glutamine--fructose-6-phosphate aminotransferase [isomerizing] (605 aa).

Cys-2 serves as the catalytic Nucleophile; for GATase activity. The 215-residue stretch at 2-216 (CGIVGIVGHQ…DGDWAVIGKT (215 aa)) folds into the Glutamine amidotransferase type-2 domain. 2 SIS domains span residues 280 to 420 (DSDA…ARGT) and 454 to 595 (LSRE…VDQP). Catalysis depends on Lys-600, which acts as the For Fru-6P isomerization activity.

The protein localises to the cytoplasm. It catalyses the reaction D-fructose 6-phosphate + L-glutamine = D-glucosamine 6-phosphate + L-glutamate. Functionally, involved in the production of the root hair deformation (HAD) factor specifically on medicago. This chain is Glutamine--fructose-6-phosphate aminotransferase [isomerizing] (nodM), found in Rhizobium meliloti (Ensifer meliloti).